The sequence spans 491 residues: G2/mitotic-specific cyclin-2 (491 aa).

Ser-2 is modified (N-acetylserine). Disordered regions lie at residues 59 to 107 (EGSR…DPSS) and 164 to 184 (HPAR…SGKK). Polar residues predominate over residues 67–77 (TRESVSRSTAA).

This sequence belongs to the cyclin family. Cyclin AB subfamily. As to quaternary structure, interacts with NAP1.

Its function is as follows. Essential for the control of the cell cycle at the G2/M (mitosis) transition. Interacts with the CDC2 protein kinase to form MPF. G2/M cyclins accumulate steadily during G2 and are abruptly destroyed at mitosis. This Saccharomyces cerevisiae (strain ATCC 204508 / S288c) (Baker's yeast) protein is G2/mitotic-specific cyclin-2 (CLB2).